Consider the following 220-residue polypeptide: Riboflavin kinase (220 aa).

The H-T-H motif-like stretch occupies residues 1–92 (METDDQYYRA…LSRILAIKNN (92 aa)). Positions 93–220 (VVITGTVTSG…GDRVSVEVYT (128 aa)) are riboflavin kinase. 102–107 (GMGEGR) serves as a coordination point for CDP. Residues T131 and N133 each contribute to the Mg(2+) site. Residues T188 and E195 each contribute to the FMN site. 200–203 (KYLR) is a CDP binding site.

This sequence belongs to the archaeal riboflavin kinase family. The cofactor is Mg(2+).

It carries out the reaction riboflavin + CTP = CDP + FMN + H(+). It functions in the pathway cofactor biosynthesis; FMN biosynthesis; FMN from riboflavin (CTP route): step 1/1. Its function is as follows. Catalyzes the CTP-dependent phosphorylation of riboflavin (vitamin B2) to form flavin mononucleotide (FMN). The sequence is that of Riboflavin kinase (ribK) from Thermoplasma acidophilum (strain ATCC 25905 / DSM 1728 / JCM 9062 / NBRC 15155 / AMRC-C165).